Consider the following 353-residue polypeptide: Putative permease PerM (353 aa).

Transmembrane regions (helical) follow at residues 19-39 (IALL…SGLL), 72-92 (IVLV…LPIA), 156-176 (LVGL…VFFL), 217-237 (VLEM…FGLN), 240-260 (LLLA…AFVV), 281-301 (CFAV…PVLF), and 310-330 (LVII…GVFF).

The protein belongs to the autoinducer-2 exporter (AI-2E) (TC 2.A.86) family.

Its subcellular location is the cell membrane. The chain is Putative permease PerM (perM) from Escherichia coli O157:H7.